The sequence spans 1010 residues: MRLFLLLAFNALMLLETHGFTDETDRQALLQFKSQVSEDKRVVLSSWNHSFPLCNWKGVTCGRKNKRVTHLELGRLQLGGVISPSIGNLSFLVSLDLYENFFGGTIPQEVGQLSRLEYLDMGINYLRGPIPLGLYNCSRLLNLRLDSNRLGGSVPSELGSLTNLVQLNLYGNNMRGKLPTSLGNLTLLEQLALSHNNLEGEIPSDVAQLTQIWSLQLVANNFSGVFPPALYNLSSLKLLGIGYNHFSGRLRPDLGILLPNLLSFNMGGNYFTGSIPTTLSNISTLERLGMNENNLTGSIPTFGNVPNLKLLFLHTNSLGSDSSRDLEFLTSLTNCTQLETLGIGRNRLGGDLPISIANLSAKLVTLDLGGTLISGSIPYDIGNLINLQKLILDQNMLSGPLPTSLGKLLNLRYLSLFSNRLSGGIPAFIGNMTMLETLDLSNNGFEGIVPTSLGNCSHLLELWIGDNKLNGTIPLEIMKIQQLLRLDMSGNSLIGSLPQDIGALQNLGTLSLGDNKLSGKLPQTLGNCLTMESLFLEGNLFYGDIPDLKGLVGVKEVDLSNNDLSGSIPEYFASFSKLEYLNLSFNNLEGKVPVKGIFENATTVSIVGNNDLCGGIMGFQLKPCLSQAPSVVKKHSSRLKKVVIGVSVGITLLLLLFMASVTLIWLRKRKKNKETNNPTPSTLEVLHEKISYGDLRNATNGFSSSNMVGSGSFGTVYKALLLTEKKVVAVKVLNMQRRGAMKSFMAECESLKDIRHRNLVKLLTACSSIDFQGNEFRALIYEFMPNGSLDMWLHPEEVEEIHRPSRTLTLLERLNIAIDVASVLDYLHVHCHEPIAHCDLKPSNVLLDDDLTAHVSDFGLARLLLKFDEESFFNQLSSAGVRGTIGYAAPEYGVGGQPSINGDVYSFGILLLEMFTGKRPTNELFGGNFTLNSYTKSALPERILDIVDESILHIGLRVGFPVVECLTMVFEVGLRCCEESPMNRLATSIVVKELISIRERFFKASRTTWR.

Residues 1–19 form the signal peptide; it reads MRLFLLLAFNALMLLETHG. Residues 20 to 645 lie on the Extracellular side of the membrane; sequence FTDETDRQAL…SSRLKKVVIG (626 aa). N48 and N88 each carry an N-linked (GlcNAc...) asparagine glycan. 10 LRR repeats span residues 89 to 113, 114 to 137, 139 to 161, 162 to 185, 186 to 209, 211 to 233, 234 to 258, 259 to 282, 283 to 307, and 310 to 333; these read LSFL…VGQL, SRLE…LYNC, RLLN…LGSL, TNLV…LGNL, TLLE…VAQL, QIWS…LYNL, SSLK…GILL, PNLL…LSNI, STLE…NVPN, and LLFL…TSLT. A glycan (N-linked (GlcNAc...) asparagine) is linked at N136. N-linked (GlcNAc...) asparagine glycosylation occurs at N184. N-linked (GlcNAc...) asparagine glycans are attached at residues N221 and N232. 2 N-linked (GlcNAc...) asparagine glycosylation sites follow: N281 and N294. N-linked (GlcNAc...) asparagine glycans are attached at residues N334 and N358. LRR repeat units follow at residues 335-359, 361-384, 385-408, 410-432, 433-455, 457-480, 481-504, 505-528, 530-551, 552-574, and 575-600; these read CTQL…IANL, AKLV…IGNL, INLQ…LGKL, NLRY…IGNM, TMLE…SLGN, SHLL…IMKI, QQLL…IGAL, QNLG…LGNC, TMES…LKGL, VGVK…YFAS, and FSKL…IFEN. N431, N455, and N470 each carry an N-linked (GlcNAc...) asparagine glycan. N582 and N600 each carry an N-linked (GlcNAc...) asparagine glycan. A helical transmembrane segment spans residues 646–666; the sequence is VSVGITLLLLLFMASVTLIWL. Over 667-1010 the chain is Cytoplasmic; sequence RKRKKNKETN…FFKASRTTWR (344 aa). Residue T699 is modified to Phosphothreonine. Residues 702 to 1002 enclose the Protein kinase domain; sequence FSSSNMVGSG…ELISIRERFF (301 aa). ATP contacts are provided by residues 708–716 and K731; that span reads VGSGSFGTV. Phosphotyrosine occurs at positions 781 and 826. D839 acts as the Proton acceptor in catalysis. Phosphotyrosine is present on Y887.

This sequence belongs to the protein kinase superfamily. Ser/Thr protein kinase family.

It localises to the cell membrane. The catalysed reaction is L-seryl-[protein] + ATP = O-phospho-L-seryl-[protein] + ADP + H(+). It catalyses the reaction L-threonyl-[protein] + ATP = O-phospho-L-threonyl-[protein] + ADP + H(+). This chain is Probable LRR receptor-like serine/threonine-protein kinase At3g47570, found in Arabidopsis thaliana (Mouse-ear cress).